The chain runs to 302 residues: Large ribosomal subunit protein uL3c (302 aa).

The N-terminal 36 residues, 1–36 (MFQSSRLVALGLCAALVLVGGSIILSGLSPNLSSPM), are a transit peptide targeting the chloroplast. The segment at 208–239 (FQGSIRRWGMKRGPMSHGSKSHRQHGSIGCSA) is disordered.

Belongs to the universal ribosomal protein uL3 family. Part of the 50S ribosomal subunit.

It is found in the plastid. The protein resides in the chloroplast. Functionally, one of the primary rRNA binding proteins, it binds directly near the 3'-end of the 23S rRNA, where it nucleates assembly of the 50S subunit. In Bigelowiella natans (Pedinomonas minutissima), this protein is Large ribosomal subunit protein uL3c (RPL3).